A 281-amino-acid polypeptide reads, in one-letter code: Hydroxyethylthiazole kinase (281 aa).

2 residues coordinate ATP: R124 and S169.

This sequence belongs to the Thz kinase family. The cofactor is Mg(2+).

It catalyses the reaction 5-(2-hydroxyethyl)-4-methylthiazole + ATP = 4-methyl-5-(2-phosphooxyethyl)-thiazole + ADP + H(+). It functions in the pathway cofactor biosynthesis; thiamine diphosphate biosynthesis; 4-methyl-5-(2-phosphoethyl)-thiazole from 5-(2-hydroxyethyl)-4-methylthiazole: step 1/1. Its function is as follows. Catalyzes the phosphorylation of the hydroxyl group of 4-methyl-5-beta-hydroxyethylthiazole (THZ). This chain is Hydroxyethylthiazole kinase, found in Rhodococcus erythropolis (strain PR4 / NBRC 100887).